Reading from the N-terminus, the 513-residue chain is Histone acetyltransferase KAT5 (513 aa).

One can recognise a Tudor-knot domain in the interval 8–65 (IEGCRLPVLRRNQDNEDEWPLAEILSVKDISGRKLFYVHYIDFNKRLDEWVTHERLDL). Lysine 52 carries the N6-acetyllysine modification. A disordered region spans residues 69–106 (QFPKKEAKTPTKNGLPGSRPGSPEREVPASAQASGKTL). A Phosphoserine modification is found at serine 86. Serine 90 is modified (phosphoserine; by CDK1 and CDK9). An N6-acetyllysine; by autocatalysis mark is found at lysine 104 and lysine 120. The segment at 122 to 217 (REAIPGGEPD…SAPRMTGSLV (96 aa)) is disordered. Residues 133-144 (PLSSSSCLQPNH) are compositionally biased toward polar residues. 4 positions are modified to N6-acetyllysine; by autocatalysis: lysine 148, lysine 150, lysine 187, and lysine 189. A Phosphoserine modification is found at serine 199. One can recognise an MYST-type HAT domain in the interval 227-504 (TRMKNIECIE…IDSKCLHFTP (278 aa)). The C2HC MYST-type zinc-finger motif lies at 260–285 (LYLCEFCLKYGRSLKCLQRHLTKCDL). Lysine 327 carries the N6-acetyllysine; by autocatalysis modification. The segment at 368–513 (ACILTLPPYQ…PKDWSKRGKW (146 aa)) is interaction with ATF2. Residues 370–372 (ILT) and 377–383 (QRRGYGK) contribute to the acetyl-CoA site. Glutamate 403 functions as the Proton donor/acceptor in the catalytic mechanism. Acetyl-CoA-binding residues include serine 407 and serine 416. Residue lysine 430 forms a Glycyl lysine isopeptide (Lys-Gly) (interchain with G-Cter in SUMO1); alternate linkage. Lysine 430 participates in a covalent cross-link: Glycyl lysine isopeptide (Lys-Gly) (interchain with G-Cter in SUMO2); alternate. Residue lysine 451 forms a Glycyl lysine isopeptide (Lys-Gly) (interchain with G-Cter in SUMO1) linkage.

The protein belongs to the MYST (SAS/MOZ) family. Component of the NuA4 histone acetyltransferase complex which contains the catalytic subunit KAT5/TIP60 and the subunits EP400, TRRAP/PAF400, BRD8/SMAP, EPC1, DMAP1/DNMAP1, RUVBL1/TIP49, RUVBL2, ING3, actin, ACTL6A/BAF53A, MORF4L1/MRG15, MORF4L2/MRGX, MRGBP, YEATS4/GAS41, VPS72/YL1 and MEAF6. KAT5/TIP60, EPC1, and ING3 together constitute a minimal HAT complex termed Piccolo NuA4. The NuA4 complex interacts with MYC. Interacts with ATM. Interacts with JADE1. Interacts with PLA2G4A/CPLA2, EDNRA and HDAC7. Interacts with the cytoplasmic tail of APP and APBB1/FE65. Interacts with TRIM24 and TRIM68. Forms a complex with SENP6 and UBE2I in response to UV irradiation. Identified in a complex with HINT1. Interacts with ATF2 and CUL3. Interacts with NR1D2 (via N-terminus). Component of a SWR1-like complex. Interacts with FOXP3. Interacts with ZBTB49. Interacts with SRF. Interacts with ATF3; promoting autoacetylation and deubiquitination by USP7. Interacts with EP300/p300; interaction promotes KAT5 autoacetylation. Interacts with PRKDC; interaction is impaired following KAT5 sumoylation. Interacts with GPR50. Interacts with NME3; this interaction enables recruitment of NME3 at DNA damage sites where it plays a role in the repair of DNA. In terms of processing, phosphorylated on Ser-86 and Ser-90; enhanced during G2/M phase. The phosphorylated form has a higher activity. Phosphorylation at Ser-90 by CDK1 or CDK9 is a prerequisite for phosphorylation at Ser-86 by GSK3. Phosphorylation at Ser-86 by GSK3 (GSK3A or GSK3B) activates acetyltransferase and acyltransferase activity. Phosphorylation at Ser-90 by CDK9 promotes KAT5 recruitment to chromatin. Phosphorylation by VRK1 following DNA damage promotes KAT5 association with chromatin and histone acetyltransferase activity. Post-translationally, autoacetylated. Autoacetylation is required for histone acetyltransferase activity. Autoacetylation at Lys-327 is facilitated by interaction with EP300/p300: it prevents ubiquitination and subsequent degradation by the proteasome and promotes acetylation of target proteins. Deacetylated by HDAC3 and SIRT1. Deacetylation by HDAC3 promotes its ubiquitination and cytoplasmic localization. Sumoylated by UBE2I at Lys-430 and Lys-451, leading to increase of its histone acetyltransferase activity in UV-induced DNA damage response, as well as its translocation to nuclear bodies. Sumoylation with SUMO2 by PIAS4 at Lys-430 promotes repair of DNA double-strand breaks (DSBs) via homologous recombination (HR). Sumoylation by PIAS4 impairs interaction with PRKDC, inhibiting non-homologous end joining (NHEJ)-mediated repair of DSBs, thereby facilitating HR. Desumoylated by SENP3. In terms of processing, ubiquitinated by MDM2, leading to its proteasome-dependent degradation. Ubiquitination is prevented by autoacetylation at Lys-327. Ubiquitinated following deacetylation by HDAC3, leading to cytoplasmic localization. Deubiquitinated by USP7 following interaction with ATF3, promoting its stabilization. In terms of tissue distribution, expressed in testis, heart, brain, kidney and liver. Weakly expressed in lung.

The protein localises to the nucleus. The protein resides in the chromosome. It is found in the cytoplasm. It localises to the centromere. Its subcellular location is the kinetochore. The protein localises to the cytoskeleton. The protein resides in the spindle pole. It is found in the nucleolus. It localises to the perinuclear region. The enzyme catalyses L-lysyl-[histone] + acetyl-CoA = N(6)-acetyl-L-lysyl-[histone] + CoA + H(+). The catalysed reaction is L-lysyl-[protein] + acetyl-CoA = N(6)-acetyl-L-lysyl-[protein] + CoA + H(+). It catalyses the reaction (2E)-butenoyl-CoA + L-lysyl-[protein] = N(6)-(2E)-butenoyl-L-lysyl-[protein] + CoA + H(+). It carries out the reaction 2-hydroxyisobutanoyl-CoA + L-lysyl-[protein] = N(6)-(2-hydroxyisobutanoyl)-L-lysyl-[protein] + CoA + H(+). The enzyme catalyses (S)-lactoyl-CoA + L-lysyl-[protein] = N(6)-[(S)-lactoyl]-L-lysyl-[protein] + CoA + H(+). Its activity is regulated as follows. Acyltransferase and acetyltransferase activities are activated by phosphorylation and autoacetylation. Autoacetylation activates the histone acetyltransferase activity. Functionally, catalytic subunit of the NuA4 histone acetyltransferase complex, a multiprotein complex involved in transcriptional activation of select genes principally by acetylation of nucleosomal histones H2A and H4. Histone acetylation alters nucleosome-DNA interactions and promotes interaction of the modified histones with other proteins which positively regulate transcription. The NuA4 histone acetyltransferase complex is required for the activation of transcriptional programs associated with proto-oncogene mediated growth induction, tumor suppressor mediated growth arrest and replicative senescence, apoptosis, and DNA repair. The NuA4 complex plays a direct role in repair of DNA double-strand breaks (DSBs) by promoting homologous recombination (HR): the complex inhibits TP53BP1 binding to chromatin via MBTD1, which recognizes and binds histone H4 trimethylated at 'Lys-20' (H4K20me), and KAT5 that catalyzes acetylation of 'Lys-15' of histone H2A (H2AK15ac), thereby blocking the ubiquitination mark required for TP53BP1 localization at DNA breaks. Also involved in DSB repair by mediating acetylation of 'Lys-5' of histone H2AX (H2AXK5ac), promoting NBN/NBS1 assembly at the sites of DNA damage. The NuA4 complex plays a key role in hematopoietic stem cell maintenance and is required to maintain acetylated H2A.Z/H2AZ1 at MYC target genes. The NuA4 complex is also required for spermatid development by promoting acetylation of histones: histone hyperacetylation is required for histone replacement during the transition from round to elongating spermatids. Component of a SWR1-like complex that specifically mediates the removal of histone H2A.Z/H2AZ1 from the nucleosome. Also acetylates non-histone proteins, such as BMAL1, ATM, AURKB, CHKA, CGAS, ERCC4/XPF, LPIN1, TP53/p53, NDC80/HEC1, NR1D2, RAN, SOX4, FOXP3, SQSTM1, ULK1 and RUBCNL/Pacer. Directly acetylates and activates ATM. Promotes nucleotide excision repair (NER) by mediating acetylation of ERCC4/XPF, thereby promoting formation of the ERCC4-ERCC1 complex. Relieves NR1D2-mediated inhibition of APOC3 expression by acetylating NR1D2. Acts as a regulator of regulatory T-cells (Treg) by catalyzing FOXP3 acetylation, thereby promoting FOXP3 transcriptional repressor activity. Involved in skeletal myoblast differentiation by mediating acetylation of SOX4. Catalyzes acetylation of APBB1/FE65, increasing its transcription activator activity. Promotes transcription elongation during the activation phase of the circadian cycle by catalyzing acetylation of BMAL1, promoting elongation of circadian transcripts. Together with GSK3 (GSK3A or GSK3B), acts as a regulator of autophagy: phosphorylated at Ser-86 by GSK3 under starvation conditions, leading to activate acetyltransferase activity and promote acetylation of key autophagy regulators, such as ULK1 and RUBCNL/Pacer. Acts as a regulator of the cGAS-STING innate antiviral response by catalyzing acetylation the N-terminus of CGAS, thereby promoting CGAS DNA-binding and activation. Also regulates lipid metabolism by mediating acetylation of CHKA or LPIN1. Promotes lipolysis of lipid droplets following glucose deprivation by mediating acetylation of isoform 1 of CHKA, thereby promoting monomerization of CHKA and its conversion into a tyrosine-protein kinase. Acts as a regulator of fatty-acid-induced triacylglycerol synthesis by catalyzing acetylation of LPIN1, thereby promoting the synthesis of diacylglycerol. In addition to protein acetyltransferase, can use different acyl-CoA substrates, such as (2E)-butenoyl-CoA (crotonyl-CoA), S-lactoyl-CoA (lactyl-CoA) and 2-hydroxyisobutanoyl-CoA (2-hydroxyisobutyryl-CoA), and is able to mediate protein crotonylation, lactylation and 2-hydroxyisobutyrylation, respectively. Acts as a key regulator of chromosome segregation and kinetochore-microtubule attachment during mitosis by mediating acetylation or crotonylation of target proteins. Catalyzes acetylation of AURKB at kinetochores, increasing AURKB activity and promoting accurate chromosome segregation in mitosis. Acetylates RAN during mitosis, promoting microtubule assembly at mitotic chromosomes. Acetylates NDC80/HEC1 during mitosis, promoting robust kinetochore-microtubule attachment. Catalyzes crotonylation of MAPRE1/EB1, thereby ensuring accurate spindle positioning in mitosis. Catalyzes lactylation of NBN/NBS1 in response to DNA damage, thereby promoting DNA double-strand breaks (DSBs) via homologous recombination (HR). The polypeptide is Histone acetyltransferase KAT5 (Mus musculus (Mouse)).